The sequence spans 232 residues: Ubiquinone biosynthesis O-methyltransferase (232 aa).

S-adenosyl-L-methionine is bound by residues Arg-36, Gly-55, Asp-76, and Met-120.

It belongs to the methyltransferase superfamily. UbiG/COQ3 family.

The enzyme catalyses a 3-demethylubiquinol + S-adenosyl-L-methionine = a ubiquinol + S-adenosyl-L-homocysteine + H(+). It carries out the reaction a 3-(all-trans-polyprenyl)benzene-1,2-diol + S-adenosyl-L-methionine = a 2-methoxy-6-(all-trans-polyprenyl)phenol + S-adenosyl-L-homocysteine + H(+). It participates in cofactor biosynthesis; ubiquinone biosynthesis. Its function is as follows. O-methyltransferase that catalyzes the 2 O-methylation steps in the ubiquinone biosynthetic pathway. The protein is Ubiquinone biosynthesis O-methyltransferase of Burkholderia vietnamiensis (strain G4 / LMG 22486) (Burkholderia cepacia (strain R1808)).